The primary structure comprises 296 residues: Nucleotide-binding protein MGAS2096_Spy0550 (296 aa).

13–20 (GMSGAGKT) contacts ATP. 63-66 (DMRS) lines the GTP pocket.

Belongs to the RapZ-like family.

In terms of biological role, displays ATPase and GTPase activities. In Streptococcus pyogenes serotype M12 (strain MGAS2096), this protein is Nucleotide-binding protein MGAS2096_Spy0550.